Consider the following 294-residue polypeptide: Sarcotoxin II-2 (294 aa).

An N-terminal signal peptide occupies residues 1–22; the sequence is MKSFVFFAACFAIVALNSLAHA. The propeptide at 23 to 24 is removed by a dipeptidylpeptidase; sequence YP. Gln25 carries the pyrrolidone carboxylic acid modification. Arg293 is modified (arginine amide).

It belongs to the attacin/sarcotoxin-2 family. Synthesized by the fat body and is eventually secreted into the hemolymph.

Its subcellular location is the secreted. Its function is as follows. Sarcotoxin II is an antibacterial protein which plays a role in the inflammatory response of this insect. The main effect of sarcotoxin II on E.coli may be the inhibition of cell wall synthesis, including septum formation. The polypeptide is Sarcotoxin II-2 (Sarcophaga peregrina (Flesh fly)).